Consider the following 211-residue polypeptide: Small ribosomal subunit protein uS5 (211 aa).

The tract at residues 1 to 41 (MPGRERRDGGRSADDNKQNDRNERRGGGRRDDRRNQQQDER) is disordered. Residues 44 to 107 (YIERVVTINR…EEARKNFFRV (64 aa)) form the S5 DRBM domain.

This sequence belongs to the universal ribosomal protein uS5 family. Part of the 30S ribosomal subunit. Contacts proteins S4 and S8.

Its function is as follows. With S4 and S12 plays an important role in translational accuracy. In terms of biological role, located at the back of the 30S subunit body where it stabilizes the conformation of the head with respect to the body. This Corynebacterium glutamicum (strain R) protein is Small ribosomal subunit protein uS5.